We begin with the raw amino-acid sequence, 204 residues long: Proteasome subunit beta type-3 (204 aa).

It belongs to the peptidase T1B family. The 26S proteasome consists of a 20S proteasome core and two 19S regulatory subunits. The 20S proteasome core is composed of 28 subunits that are arranged in four stacked rings, resulting in a barrel-shaped structure. The two end rings are each formed by seven alpha subunits, and the two central rings are each formed by seven beta subunits. The catalytic chamber with the active sites is on the inside of the barrel.

It localises to the cytoplasm. The protein localises to the nucleus. Its function is as follows. Non-catalytic component of the proteasome, a multicatalytic proteinase complex which is characterized by its ability to cleave peptides with Arg, Phe, Tyr, Leu, and Glu adjacent to the leaving group at neutral or slightly basic pH. The proteasome has an ATP-dependent proteolytic activity. The sequence is that of Proteasome subunit beta type-3 (PBC1) from Picea mariana (Black spruce).